The following is a 421-amino-acid chain: Serine hydroxymethyltransferase (421 aa).

Residues Leu-121 and Gly-125 to Leu-127 each bind (6S)-5,6,7,8-tetrahydrofolate. Lys-230 is modified (N6-(pyridoxal phosphate)lysine). (6S)-5,6,7,8-tetrahydrofolate-binding positions include Glu-246 and Ser-354 to Phe-356.

This sequence belongs to the SHMT family. In terms of assembly, homodimer. It depends on pyridoxal 5'-phosphate as a cofactor.

The protein resides in the cytoplasm. The enzyme catalyses (6R)-5,10-methylene-5,6,7,8-tetrahydrofolate + glycine + H2O = (6S)-5,6,7,8-tetrahydrofolate + L-serine. It participates in one-carbon metabolism; tetrahydrofolate interconversion. Its pathway is amino-acid biosynthesis; glycine biosynthesis; glycine from L-serine: step 1/1. Functionally, catalyzes the reversible interconversion of serine and glycine with tetrahydrofolate (THF) serving as the one-carbon carrier. This reaction serves as the major source of one-carbon groups required for the biosynthesis of purines, thymidylate, methionine, and other important biomolecules. Also exhibits THF-independent aldolase activity toward beta-hydroxyamino acids, producing glycine and aldehydes, via a retro-aldol mechanism. In Rickettsia felis (strain ATCC VR-1525 / URRWXCal2) (Rickettsia azadi), this protein is Serine hydroxymethyltransferase.